Here is a 264-residue protein sequence, read N- to C-terminus: Thymidylate synthase (264 aa).

DUMP is bound at residue Arg-21. A (6R)-5,10-methylene-5,6,7,8-tetrahydrofolate-binding site is contributed by His-51. A dUMP-binding site is contributed by Arg-126–Arg-127. The active-site Nucleophile is the Cys-146. DUMP-binding positions include Arg-166–Asp-169, Asn-177, and His-207–Tyr-209. Asp-169 contributes to the (6R)-5,10-methylene-5,6,7,8-tetrahydrofolate binding site. Ala-263 contacts (6R)-5,10-methylene-5,6,7,8-tetrahydrofolate.

This sequence belongs to the thymidylate synthase family. Bacterial-type ThyA subfamily. As to quaternary structure, homodimer.

The protein resides in the cytoplasm. It carries out the reaction dUMP + (6R)-5,10-methylene-5,6,7,8-tetrahydrofolate = 7,8-dihydrofolate + dTMP. Its pathway is pyrimidine metabolism; dTTP biosynthesis. Catalyzes the reductive methylation of 2'-deoxyuridine-5'-monophosphate (dUMP) to 2'-deoxythymidine-5'-monophosphate (dTMP) while utilizing 5,10-methylenetetrahydrofolate (mTHF) as the methyl donor and reductant in the reaction, yielding dihydrofolate (DHF) as a by-product. This enzymatic reaction provides an intracellular de novo source of dTMP, an essential precursor for DNA biosynthesis. This is Thymidylate synthase from Hahella chejuensis (strain KCTC 2396).